The sequence spans 509 residues: MDIRAAEISAILKEQIKNFGKEAEVSEVGQVLSVGDGIARVYGLDNVQAGEMVEFPGGIRGMALNLESDNVGVVIFGADRDIKEGDVVKRTGAIVDVPVGPELLGRVVDALGNPIDGKGPIKAKERRRVDVKAPGIIPRKSVHEPMSTGLKAIDALIPVGRGQRELVIGDRQTGKTAIILDTFLNQKPIHDNGPDKDKLYCVYVAVGQKRSTVAQFVKVLEERGALEYSIVVAATASDPAPMQYLAPFAGCAMGEYFRDNGQHALIGYDDLSKQAVAYRQMSLLLRRPPGREAYPGDVFYLHSRLLERAAKLNDENGAGSLTALPVIETQGNDVSAFIPTNVISITDGQIFLETNLFYQGIRPAVNVGLSVSRVGSSAQIKAMKQVAGSIKGELAQYREMAAFAQFGSDLDAATQRLLNRGARLTELLKQPQFSPLKTEEQVAVIYAGVNGYLDKLAVNQVGKFEEGLLASLRTEHKDVLEGICNEKALTDDLKAKLKAAIDAFAKSFA.

An ATP-binding site is contributed by 169-176 (GDRQTGKT).

Belongs to the ATPase alpha/beta chains family. F-type ATPases have 2 components, CF(1) - the catalytic core - and CF(0) - the membrane proton channel. CF(1) has five subunits: alpha(3), beta(3), gamma(1), delta(1), epsilon(1). CF(0) has three main subunits: a(1), b(2) and c(9-12). The alpha and beta chains form an alternating ring which encloses part of the gamma chain. CF(1) is attached to CF(0) by a central stalk formed by the gamma and epsilon chains, while a peripheral stalk is formed by the delta and b chains.

The protein resides in the cell inner membrane. The catalysed reaction is ATP + H2O + 4 H(+)(in) = ADP + phosphate + 5 H(+)(out). Its function is as follows. Produces ATP from ADP in the presence of a proton gradient across the membrane. The alpha chain is a regulatory subunit. This is ATP synthase subunit alpha from Brucella melitensis biotype 1 (strain ATCC 23456 / CCUG 17765 / NCTC 10094 / 16M).